A 447-amino-acid polypeptide reads, in one-letter code: Na(+)-translocating NADH-quinone reductase subunit A (447 aa).

It belongs to the NqrA family. Composed of six subunits; NqrA, NqrB, NqrC, NqrD, NqrE and NqrF.

It carries out the reaction a ubiquinone + n Na(+)(in) + NADH + H(+) = a ubiquinol + n Na(+)(out) + NAD(+). In terms of biological role, NQR complex catalyzes the reduction of ubiquinone-1 to ubiquinol by two successive reactions, coupled with the transport of Na(+) ions from the cytoplasm to the periplasm. NqrA to NqrE are probably involved in the second step, the conversion of ubisemiquinone to ubiquinol. The polypeptide is Na(+)-translocating NADH-quinone reductase subunit A (Neisseria meningitidis serogroup B (strain ATCC BAA-335 / MC58)).